Reading from the N-terminus, the 190-residue chain is Protein PLANT CADMIUM RESISTANCE 8 (190 aa).

The segment at 1–31 is disordered; the sequence is MGRVTTPSEEDSNNGLPVQQPGTPNQRTRVP. Over residues 13 to 28 the composition is skewed to polar residues; sequence NNGLPVQQPGTPNQRT. Threonine 23 is subject to Phosphothreonine. A helical membrane pass occupies residues 94–113; the sequence is LGTFMYLLMMPALCSHWVMG.

The protein belongs to the cornifelin family.

Its subcellular location is the cell membrane. Its function is as follows. May be involved in heavy metals transport. The protein is Protein PLANT CADMIUM RESISTANCE 8 (PCR8) of Arabidopsis thaliana (Mouse-ear cress).